Here is a 248-residue protein sequence, read N- to C-terminus: Metallo-beta-lactamase type 2 (248 aa).

The first 21 residues, 1–21 (MKRLKGLLVLALGFTGLQVFG), serve as a signal peptide directing secretion. Zn(2+) contacts are provided by His-97, His-99, Asp-101, His-160, and Cys-179. A substrate-binding site is contributed by Lys-182. His-221 is a Zn(2+) binding site.

This sequence belongs to the metallo-beta-lactamase superfamily. Class-B beta-lactamase family. Monomer. The cofactor is Zn(2+).

It is found in the periplasm. It catalyses the reaction a beta-lactam + H2O = a substituted beta-amino acid. Functionally, confers resistance to the different beta-lactams antibiotics (penicillin, cephalosporin and carbapenem) via the hydrolysis of the beta-lactam ring. The chain is Metallo-beta-lactamase type 2 (blaB6) from Elizabethkingia meningoseptica (Chryseobacterium meningosepticum).